The following is a 430-amino-acid chain: Glutamyl-tRNA reductase (430 aa).

Residues 50–53 (TCNR), Ser108, 113–115 (EPQ), and Gln119 contribute to the substrate site. Cys51 functions as the Nucleophile in the catalytic mechanism. 188 to 193 (GAGEMA) lines the NADP(+) pocket.

The protein belongs to the glutamyl-tRNA reductase family. As to quaternary structure, homodimer.

It catalyses the reaction (S)-4-amino-5-oxopentanoate + tRNA(Glu) + NADP(+) = L-glutamyl-tRNA(Glu) + NADPH + H(+). The protein operates within porphyrin-containing compound metabolism; protoporphyrin-IX biosynthesis; 5-aminolevulinate from L-glutamyl-tRNA(Glu): step 1/2. Its function is as follows. Catalyzes the NADPH-dependent reduction of glutamyl-tRNA(Glu) to glutamate 1-semialdehyde (GSA). This Desulfovibrio desulfuricans (strain ATCC 27774 / DSM 6949 / MB) protein is Glutamyl-tRNA reductase.